The chain runs to 982 residues: Polyribonucleotide nucleotidyltransferase 2, mitochondrial (982 aa).

Residues 1-39 (MSMAVASLRLLARGGRRRARFPAPLSVPGGRAAFLSGAA) constitute a mitochondrion transit peptide. Residues 624–678 (PRLATLSFSSDSLRKLLFHRKKIEQETGARVSVSDGTVTIVAKTQPIMDKAIEKV) enclose the KH domain. The S1 motif 1 domain maps to 689–757 (GRTYKGVVSS…LRGNIKLSLK (69 aa)). Disordered regions lie at residues 792–814 (PSKD…EETP) and 832–892 (QDVT…NDVL). Composition is skewed to low complexity over residues 846 to 855 (AKSSPKLSKP) and 868 to 877 (KKTSGASTTA). An S1 motif 2 domain is found at 920 to 982 (GDVVTAKVYQ…KGIPVFSLLD (63 aa)).

It belongs to the polyribonucleotide nucleotidyltransferase family.

It localises to the mitochondrion. It carries out the reaction RNA(n+1) + phosphate = RNA(n) + a ribonucleoside 5'-diphosphate. Involved in the 3'-end maturation of mitochondrial mRNAs, rRNAs and tRNAs. Functions as a poly(A) mRNA 3'-5' degrading phosphorylase. The polypeptide is Polyribonucleotide nucleotidyltransferase 2, mitochondrial (PNP2) (Oryza sativa subsp. japonica (Rice)).